A 259-amino-acid chain; its full sequence is 3-deoxy-manno-octulosonate cytidylyltransferase (259 aa).

It belongs to the KdsB family.

The protein resides in the cytoplasm. It catalyses the reaction 3-deoxy-alpha-D-manno-oct-2-ulosonate + CTP = CMP-3-deoxy-beta-D-manno-octulosonate + diphosphate. It participates in nucleotide-sugar biosynthesis; CMP-3-deoxy-D-manno-octulosonate biosynthesis; CMP-3-deoxy-D-manno-octulosonate from 3-deoxy-D-manno-octulosonate and CTP: step 1/1. The protein operates within bacterial outer membrane biogenesis; lipopolysaccharide biosynthesis. Its function is as follows. Activates KDO (a required 8-carbon sugar) for incorporation into bacterial lipopolysaccharide in Gram-negative bacteria. The chain is 3-deoxy-manno-octulosonate cytidylyltransferase from Xanthomonas euvesicatoria pv. vesicatoria (strain 85-10) (Xanthomonas campestris pv. vesicatoria).